Here is a 148-residue protein sequence, read N- to C-terminus: Deoxyuridine 5'-triphosphate nucleotidohydrolase (148 aa).

Substrate-binding positions include arginine 67–glycine 69, asparagine 80, threonine 84–aspartate 86, and lysine 94.

The protein belongs to the dUTPase family. It depends on Mg(2+) as a cofactor.

The catalysed reaction is dUTP + H2O = dUMP + diphosphate + H(+). It functions in the pathway pyrimidine metabolism; dUMP biosynthesis; dUMP from dCTP (dUTP route): step 2/2. Its function is as follows. This enzyme is involved in nucleotide metabolism: it produces dUMP, the immediate precursor of thymidine nucleotides and it decreases the intracellular concentration of dUTP so that uracil cannot be incorporated into DNA. This chain is Deoxyuridine 5'-triphosphate nucleotidohydrolase, found in Orientia tsutsugamushi (strain Boryong) (Rickettsia tsutsugamushi).